Here is a 130-residue protein sequence, read N- to C-terminus: Small ribosomal subunit protein uS8 (130 aa).

The protein belongs to the universal ribosomal protein uS8 family. Part of the 30S ribosomal subunit. Contacts proteins S5 and S12.

Functionally, one of the primary rRNA binding proteins, it binds directly to 16S rRNA central domain where it helps coordinate assembly of the platform of the 30S subunit. In Buchnera aphidicola subsp. Schizaphis graminum (strain Sg), this protein is Small ribosomal subunit protein uS8.